A 197-amino-acid chain; its full sequence is Large ribosomal subunit protein uL10 (197 aa).

Residues 162 to 197 (READGETAETPAQETASDDSKSTKAEASDASTTENK) form a disordered region. Basic and acidic residues predominate over residues 179–188 (DDSKSTKAEA).

Belongs to the universal ribosomal protein uL10 family. As to quaternary structure, part of the ribosomal stalk of the 50S ribosomal subunit. The N-terminus interacts with L11 and the large rRNA to form the base of the stalk. The C-terminus forms an elongated spine to which L12 dimers bind in a sequential fashion forming a multimeric L10(L12)X complex.

Its function is as follows. Forms part of the ribosomal stalk, playing a central role in the interaction of the ribosome with GTP-bound translation factors. The chain is Large ribosomal subunit protein uL10 from Oenococcus oeni (strain ATCC BAA-331 / PSU-1).